The primary structure comprises 638 residues: 1-deoxy-D-xylulose-5-phosphate synthase (638 aa).

Thiamine diphosphate is bound by residues His-79 and Gly-120 to Ser-122. Asp-151 is a binding site for Mg(2+). Thiamine diphosphate contacts are provided by residues Gly-152–Ala-153, Asn-182, Tyr-291, and Glu-373. A Mg(2+)-binding site is contributed by Asn-182.

This sequence belongs to the transketolase family. DXPS subfamily. Homodimer. The cofactor is Mg(2+). Requires thiamine diphosphate as cofactor.

The catalysed reaction is D-glyceraldehyde 3-phosphate + pyruvate + H(+) = 1-deoxy-D-xylulose 5-phosphate + CO2. It functions in the pathway metabolic intermediate biosynthesis; 1-deoxy-D-xylulose 5-phosphate biosynthesis; 1-deoxy-D-xylulose 5-phosphate from D-glyceraldehyde 3-phosphate and pyruvate: step 1/1. Functionally, catalyzes the acyloin condensation reaction between C atoms 2 and 3 of pyruvate and glyceraldehyde 3-phosphate to yield 1-deoxy-D-xylulose-5-phosphate (DXP). The protein is 1-deoxy-D-xylulose-5-phosphate synthase of Xanthomonas euvesicatoria pv. vesicatoria (strain 85-10) (Xanthomonas campestris pv. vesicatoria).